The primary structure comprises 242 residues: ATP synthase subunit a (242 aa).

The next 6 helical transmembrane spans lie at 29–49 (SAAYMLLASVLALTYFYLAFS), 84–104 (FVPVIFTLFVFILFCNLFGMI), 114–134 (IIITFALAILVFLMVTIVGFV), 140–160 (FLSLFLPHGTPLWLAPLMIII), 189–209 (VIASFVITLMIYLKFLPIPLM), and 210–230 (VILIGFEIFVAILQAYIFTIL).

Belongs to the ATPase A chain family. As to quaternary structure, F-type ATPases have 2 components, CF(1) - the catalytic core - and CF(0) - the membrane proton channel. CF(1) has five subunits: alpha(3), beta(3), gamma(1), delta(1), epsilon(1). CF(0) has three main subunits: a(1), b(2) and c(9-12). The alpha and beta chains form an alternating ring which encloses part of the gamma chain. CF(1) is attached to CF(0) by a central stalk formed by the gamma and epsilon chains, while a peripheral stalk is formed by the delta and b chains.

The protein resides in the cell inner membrane. Key component of the proton channel; it plays a direct role in the translocation of protons across the membrane. The polypeptide is ATP synthase subunit a (Rickettsia bellii (strain OSU 85-389)).